A 449-amino-acid polypeptide reads, in one-letter code: Interferon-related developmental regulator 1 (449 aa).

Residues 1–10 are compositionally biased toward basic residues; the sequence is MPKNKKRNAP. A disordered region spans residues 1–41; sequence MPKNKKRNAPHRGGGGGGGSGAATSAATTGGPHRTVQPFSD. The span at 12 to 21 shows a compositional bias: gly residues; that stretch reads RGGGGGGGSG. The segment covering 22–31 has biased composition (low complexity); it reads AATSAATTGG.

Belongs to the IFRD family. Interacts with PSIP1/LEDGF. Expressed at high levels in the embryonic brain in the period related to neuroblast proliferation and differentiation.

It is found in the cytoplasm. The protein resides in the cell membrane. The protein localises to the nucleus. Probably participates in neurogenesis. Could play a role in regulating gene activity in the proliferative and/or differentiative pathways induced by NGF. This chain is Interferon-related developmental regulator 1 (Ifrd1), found in Rattus norvegicus (Rat).